Consider the following 292-residue polypeptide: UPF0696 protein C11orf68 (292 aa).

The span at 1–11 (MAAAAAAAVAG) shows a compositional bias: low complexity. The tract at residues 1–60 (MAAAAAAAVAGVGRGGGGAEPRQERSRARGWAGVERSEGRRMEPGEELEEEGSPGGREDG) is disordered. Arg29 carries the post-translational modification Omega-N-methylarginine. Positions 35–44 (ERSEGRRMEP) are enriched in basic and acidic residues.

The protein belongs to the UPF0696 family.

The polypeptide is UPF0696 protein C11orf68 (C11orf68) (Homo sapiens (Human)).